The following is a 552-amino-acid chain: Non-structural protein NS1 (552 aa).

It belongs to the orbivirus non-structural protein NS1 family.

The sequence is that of Non-structural protein NS1 (Segment-5) from Antilocapra americana (Pronghorn).